Here is a 451-residue protein sequence, read N- to C-terminus: AAA-ATPase At3g50940 (451 aa).

A signal peptide spans methionine 1–alanine 25. Glycine 254–serine 261 contacts ATP.

Belongs to the AAA ATPase family. BCS1 subfamily. Mg(2+) is required as a cofactor.

It catalyses the reaction ATP + H2O = ADP + phosphate + H(+). The sequence is that of AAA-ATPase At3g50940 from Arabidopsis thaliana (Mouse-ear cress).